Consider the following 113-residue polypeptide: NYLSKNDELRKGDSLVSNNGEFKAVFQDDANFVIYGWQPLWASDTYGSDAIRLCMQADCNLVMYNGSGQARWHTNTSKGDCNMCRLFLTNEGKLVLNKESTEIWNSDKNKGSK.

Positions 1–109 constitute a Bulb-type lectin domain; sequence NYLSKNDELR…STEIWNSDKN (109 aa).

As to quaternary structure, homotetramer. Interacts with alpha-1-beta-1 integrin (ITGA1/ITGB1). Post-translationally, not glycosylated. Not N-glycosylated and not O-glycosylated with the mostcommon O-linked glycoconjugates. The N-terminus is blocked. As to expression, expressed by sting venom glands and is also found in skin mucus. Not found in other tissues tested.

The protein resides in the secreted. May contribute to some of the local and systemic effects of envenomation by the scorpionfish. Preferentially recognizes mannose-containing carbohydrate structures, but its interaction with single mannose residues is weak. Potently inhibits alpha-1-beta-1 integrin (ITGA1/ITGB1) binding to basement membrane collagen IV in a divalent cation-independent manner. In addition, moderately inhibits both laminin binding integrins alpha-3-beta-1 (ITGA3/ITGB1) and alpha-7-beta-1 (ITGA7/ITGB1). Weakens the cell-collagen contacts, reduces cell spreading, and alters the actin cytoskeleton, after the compensating alpha-2-beta-1 integrin is blocked. On the cellular level, fails to completely detach hepatocarcinoma HepG2 cells and primary arterial smooth muscle cells from the collagen IV fragment CB3. The sequence is that of B-type lectin plumieribetin from Scorpaena plumieri (Spotted scorpionfish).